Consider the following 237-residue polypeptide: Early nodulin-like protein 1 (237 aa).

Residues 1–28 (MEASRRWPYAAWFMAVLGLVAVFSSSEA) form the signal peptide. The Phytocyanin domain occupies 29-134 (YVFYAGGRDG…GQKLYIIVMA (106 aa)). The N-linked (GlcNAc...) asparagine glycan is linked to N59. A disulfide bridge connects residues C85 and C122. The interval 139 to 215 (KPSEAPEPAG…SLGAPPPTSG (77 aa)) is disordered. 2 stretches are compositionally biased toward low complexity: residues 140–152 (PSEA…AAGP) and 201–215 (MSRS…PTSG). S206 is lipidated: GPI-anchor amidated serine. The propeptide at 207-237 (LGAPPPTSGAAGLAGVVASVVVGVLGALLMF) is removed in mature form.

The protein belongs to the early nodulin-like (ENODL) family. As to expression, expressed ubiquitously. Accumulates particularly in reproductive tissues, especially in maturing seeds.

Its subcellular location is the vacuole. The protein localises to the aleurone grain membrane. Its function is as follows. May act as a carbohydrate transporter. The polypeptide is Early nodulin-like protein 1 (Oryza sativa subsp. japonica (Rice)).